The following is a 520-amino-acid chain: Bifunctional purine biosynthesis protein PurH (520 aa).

The region spanning methionine 1–threonine 146 is the MGS-like domain.

Belongs to the PurH family.

It carries out the reaction (6R)-10-formyltetrahydrofolate + 5-amino-1-(5-phospho-beta-D-ribosyl)imidazole-4-carboxamide = 5-formamido-1-(5-phospho-D-ribosyl)imidazole-4-carboxamide + (6S)-5,6,7,8-tetrahydrofolate. The catalysed reaction is IMP + H2O = 5-formamido-1-(5-phospho-D-ribosyl)imidazole-4-carboxamide. It functions in the pathway purine metabolism; IMP biosynthesis via de novo pathway; 5-formamido-1-(5-phospho-D-ribosyl)imidazole-4-carboxamide from 5-amino-1-(5-phospho-D-ribosyl)imidazole-4-carboxamide (10-formyl THF route): step 1/1. Its pathway is purine metabolism; IMP biosynthesis via de novo pathway; IMP from 5-formamido-1-(5-phospho-D-ribosyl)imidazole-4-carboxamide: step 1/1. This chain is Bifunctional purine biosynthesis protein PurH, found in Synechococcus sp. (strain CC9902).